The chain runs to 422 residues: MLRVRCLRGGSRGAEAAHLIGALVGRALSGRLSRASRSSSSSAAAQLPLSAHEQVPEPTAEECPVCAHNEWDPLEEVIVGRAENACVPPFTVEVKANTYEKYWPFYQQYGGQTFPKEHVQKAVAEIEEMCNILQHEGVTVRRPEPVDWSLEYRTPDFSSTGMYAAMPRDILMVVGNEIIEAPMAWRARFFEYRAYRPLIKEYFRRGARWTTAPKPTMADQLYDQDYPIRTVEDRHKLAAQGKFVTTEFEPCFDAADFIRAGTDIFVQRSQVTNYMGIEWMRRHLSPTYKIHIISFKDPNPMHIDATFNIIGPGLVLSNPDRPCRQIEMFKKAGWTVVTPPTPLIPDNHPLWMSSKWLSMNVLMLDEKRVMVDANESTIQKMFESLGIKTVKVSIRHANSLGGGFHCWTTDVRRRGTLQSYFL.

Residues D253 and H302 contribute to the active site. C406 functions as the Amidino-cysteine intermediate in the catalytic mechanism.

This sequence belongs to the amidinotransferase family. As to quaternary structure, homodimer. In terms of tissue distribution, strongly expressed in neurons and glia of the brain, the lamina propria, submucosa and serosa of the small intestine, in oocytes and on the fringes of the pancreas. Not expressed in the retina, eye lens, heart or bulbus arteriosus. Expressed in the yolk syncytial layer in gastrula stage embryos, in the yolk syncytial layer and mature somites in early segmentation embryos and in the yolk syncytial layer and the liver of long-pec stage (48 hours post-fertilization) embryos.

The protein resides in the mitochondrion inner membrane. The enzyme catalyses L-arginine + glycine = guanidinoacetate + L-ornithine. It functions in the pathway amine and polyamine biosynthesis; creatine biosynthesis; creatine from L-arginine and glycine: step 1/2. Catalyzes the biosynthesis of guanidinoacetate, the immediate precursor of creatine. Creatine plays a vital role in energy metabolism in muscle tissues. May play a role in embryonic and central nervous system development. This Danio rerio (Zebrafish) protein is Glycine amidinotransferase, mitochondrial.